Reading from the N-terminus, the 827-residue chain is Cell surface glycoprotein (827 aa).

The N-terminal stretch at 1–34 (MTKLKDQTRAILLATLMVTSVFAGAIAFTGSAAA) is a signal peptide. Residue Asn47 is glycosylated (N-linked (Glc...) asparagine). Residues 73–102 (PLLTGTAGNSEGVSLDLSSPIPQTTENQPL) show a composition bias toward polar residues. The segment at 73–111 (PLLTGTAGNSEGVSLDLSSPIPQTTENQPLGTYDVDGSG) is disordered. Residues Asn117, Asn308, Asn313, Asn532, and Asn766 are each glycosylated (N-linked (Glc...) asparagine). The disordered stretch occupies residues 755 to 804 (SEREDTTTSSDNATDTTTTTDGPTETTTTAEPTETTEEPTEETTTSSNTP). Over residues 761–787 (TTSSDNATDTTTTTDGPTETTTTAEPT) the composition is skewed to low complexity. The short motif at 804–806 (PGF) is the PGF sorting signal element. Residues 804 to 823 (PGFGIAVALVALVGAALLAL) traverse the membrane as a helical segment.

It belongs to the halobacterial S-layer protein family. In terms of processing, O-glycosylated on 4 to 6 threonine residues; glycans consist of Glc-Gal disaccharides. The N-terminus is not blocked. Post-translationally, cleaved by the archaeosortase ArtA at the C-terminus, with removal of a short hydrophobic segment. In terms of processing, lipidation: Following protein translocation across the membrane, the protein is modified by a derivative of mevalonic acid. Lipid modification is ArtA-dependent and requires the conserved C-terminal PGF motif. Asn-47 and Asn-117 are glycosylated by a pentasaccharide comprising a hexose, 2 hexuronic acids, a methyl ester of a hexuronic acid and mannose. The pentasaccharide is produced in 2 steps: first, a tetrasaccharide is built on dolichol-P and then transferred to the S-layer glycoprotein. Then, the mannose fifth sugar is attached to a distinct molecule of dolichol-P and is transferred to the protein already carrying the tetrasaccharide. The pentasaccharide on Asn-47 was initially thought to contain mannose, galactose, glucose and idose with a relative ratio of 1/3/3/0.2. However, it was later shown that it is not the case. Under low-salt conditions (1.75 M instead of 3.4 M), a tetrasaccharide consisting of a sulfated hexose, 2 hexoses and rhamnose is attached to Asn-532.

The protein resides in the secreted. It localises to the cell wall. It is found in the S-layer. Its subcellular location is the cell membrane. Its function is as follows. S-layer protein. The S-layer is a paracrystalline mono-layered assembly of proteins which coat the surface of the cell. The chain is Cell surface glycoprotein (csg) from Haloferax volcanii (strain ATCC 29605 / DSM 3757 / JCM 8879 / NBRC 14742 / NCIMB 2012 / VKM B-1768 / DS2) (Halobacterium volcanii).